We begin with the raw amino-acid sequence, 181 residues long: Oligoribonuclease (181 aa).

Residues 8-171 (LIWIDLEMTG…DDIRESVAEL (164 aa)) enclose the Exonuclease domain. The active site involves tyrosine 129.

The protein belongs to the oligoribonuclease family.

It is found in the cytoplasm. In terms of biological role, 3'-to-5' exoribonuclease specific for small oligoribonucleotides. In Shigella flexneri, this protein is Oligoribonuclease.